Reading from the N-terminus, the 462-residue chain is 7-hydroxymethyl chlorophyll a reductase, chloroplastic (462 aa).

The N-terminal 20 residues, Met1–Asn20, are a transit peptide targeting the chloroplast.

This sequence belongs to the FrhB family. In terms of assembly, interacts with SGR1, the chlorophyll catabolic enzymes (CCEs) NYC1, NOL and RCCR, and the LHCII complex. Part of a SGR1-CCE-LHCII complex, which acts in chlorophyll breakdown. FAD is required as a cofactor. The cofactor is iron-sulfur cluster.

The protein resides in the plastid. It is found in the chloroplast. It catalyses the reaction chlorophyll a + 2 oxidized [2Fe-2S]-[ferredoxin] + H2O = 7(1)-hydroxychlorophyll a + 2 reduced [2Fe-2S]-[ferredoxin] + 2 H(+). Probable iron-sulfur flavoprotein that converts 7-hydroxymethyl chlorophyll a to chlorophyll a using ferredoxin as a reducing equivalent. Catalyzes the reduction of a hydroxymethyl group to a methyl group. Belongs to the chlorophyll catabolic enzymes (CCEs). The chain is 7-hydroxymethyl chlorophyll a reductase, chloroplastic (HCAR) from Arabidopsis thaliana (Mouse-ear cress).